The chain runs to 424 residues: MDKLLIKGGRSLAGTVDISGAKNAALPELCAALLTADTVTLENVPRLQDVATMLKLIRNMGVEAERGTHAPGTVTLHAGALSSPEAPYELVKTMRASVLALGPLLARFGEATVSLPGGCAIGSRPVDQHIKGLQAMGAEIVVEHGYMIAKLPAGQKRLKGVSITTDMVTVTGTENFLMAASLAEGETILENAAQEPEIGDLADMLIKMGAKIEGHGTRRIRIQGVERLHGCTHQVVADRIETGTFLCAVAAAGGDVVLRHGRADHLDAVIDKLREAGATITAGEGFIRIQAQGRMKAQSFRTTEYPGFPTDMQAQFMALNAIAQGSSTVTETIFENRFMHVNEMVRLGAKIQIEGKAAVMEGVEKLSGATVMATDLRASASLVIAGLVAEGETLVDRIYHLDRGYDQMEAKLRGIGADIERVRA.

A phosphoenolpyruvate-binding site is contributed by 22–23 (KN). R95 is a binding site for UDP-N-acetyl-alpha-D-glucosamine. C119 (proton donor) is an active-site residue. A 2-(S-cysteinyl)pyruvic acid O-phosphothioketal modification is found at C119. Residues 124–128 (RPVDQ), D311, and I333 contribute to the UDP-N-acetyl-alpha-D-glucosamine site.

The protein belongs to the EPSP synthase family. MurA subfamily.

It localises to the cytoplasm. The catalysed reaction is phosphoenolpyruvate + UDP-N-acetyl-alpha-D-glucosamine = UDP-N-acetyl-3-O-(1-carboxyvinyl)-alpha-D-glucosamine + phosphate. The protein operates within cell wall biogenesis; peptidoglycan biosynthesis. Its function is as follows. Cell wall formation. Adds enolpyruvyl to UDP-N-acetylglucosamine. The protein is UDP-N-acetylglucosamine 1-carboxyvinyltransferase of Polaromonas sp. (strain JS666 / ATCC BAA-500).